The sequence spans 2124 residues: Genome polyprotein (2124 aa).

Residue Gly2 is the site of N-myristoyl glycine; by host attachment. Residues 873–880 (VARDLLLI) are host EIF4E binding. Residues 1102 to 1264 (VQIATYFRNF…SAATKNGKLD (163 aa)) enclose the SF3 helicase domain. Position 1130–1137 (1130–1137 (GKPGVGKS)) interacts with ATP. Over residues 1415–1437 (DKPKEEEEEPEEKKEKKTEESKE) the composition is skewed to basic and acidic residues. The segment at 1415–1446 (DKPKEEEEEPEEKKEKKTEESKEAAGPYNGPT) is disordered. Tyr1442 bears the O-(5'-phospho-RNA)-tyrosine mark. One can recognise a Peptidase C3 domain in the interval 1459-1648 (SPLMDMEKKI…VGTRLTARMI (190 aa)). Catalysis depends on for protease 3C activity residues His1501, Asp1535, and Cys1612. In terms of domain architecture, RdRp catalytic spans 1893–2011 (PYLYDFDYSN…ASKFELDLVM (119 aa)). Catalysis depends on for RdRp activity residues Asp1899 and Asp1997.

It belongs to the picornaviruses polyprotein family. In terms of assembly, interacts with host EIF4E. As to quaternary structure, interacts with host IFIH1/MDA5; this interaction inhibits the induction of the IFN-beta signal pathway. Post-translationally, specific enzymatic cleavages by the viral protease in vivo yield a variety of precursors and mature proteins. The polyprotein seems to be cotranslationally cleaved at the 2A/2B junction by a ribosomal skip from one codon to the next without formation of a peptide bond. This process would release the P1-2A peptide from the translational complex. In terms of processing, during virion maturation, immature virions are rendered infectious following cleavage of VP0 into VP4 and VP2. This maturation seems to be an autocatalytic event triggered by the presence of RNA in the capsid and is followed by a conformational change of the particle. Myristoylation is required during RNA encapsidation and formation of the mature virus particle. Post-translationally, uridylylated by the polymerase and is covalently linked to the 5'-end of genomic RNA. This uridylylated form acts as a nucleotide-peptide primer for the polymerase.

It localises to the virion. The protein resides in the host cytoplasm. It is found in the host nucleus. Its subcellular location is the host nucleolus. The protein localises to the host cytoplasmic vesicle membrane. It catalyses the reaction RNA(n) + a ribonucleoside 5'-triphosphate = RNA(n+1) + diphosphate. The catalysed reaction is ATP + H2O = ADP + phosphate + H(+). The enzyme catalyses Selective cleavage of Gln-|-Gly bond in the poliovirus polyprotein. In other picornavirus reactions Glu may be substituted for Gln, and Ser or Thr for Gly.. Forms an icosahedral capsid of pseudo T=3 symmetry with capsid proteins VP2 and VP3. Together they form an icosahedral capsid composed of 60 copies of each VP1, VP2, and VP3, with a diameter of approximately 300 Angstroms. VP4 lies on the inner surface of the protein shell formed by VP1, VP2 and VP3. All the three latter proteins contain a beta-sheet structure called beta-barrel jelly roll. VP1 is situated at the 12 fivefold axes, whereas VP2 and VP3 are located at the quasi-sixfold axes. Its function is as follows. Lies on the inner surface of the capsid shell. After binding to the host receptor, the capsid undergoes conformational changes. Capsid protein VP4 is released, capsid protein VP1 N-terminus is externalized, and together, they shape a pore in the host membrane through which the viral genome is translocated into the host cell cytoplasm. After genome has been released, the channel shrinks. In terms of biological role, VP0 precursor is a component of immature procapsids. Functionally, involved in host translation shutoff by inhibiting cap-dependent mRNA translation. Nuclear localization is required for this function. The resulting inhibition of cellular protein synthesis serves to ensure maximal viral gene expression and to evade host immune response. Affects membrane integrity and causes an increase in membrane permeability. Its function is as follows. Associates with and induces structural rearrangements of intracellular membranes. It displays RNA-binding, nucleotide binding and NTPase activities. Interacts with IFIH1/MDA5 to inhibit the induction of the IFN-beta signal pathway. In terms of biological role, serves as membrane anchor via its hydrophobic domain. Functionally, forms a primer, VPg-pU, which is utilized by the polymerase for the initiation of RNA chains. Cysteine protease that generates mature viral proteins from the precursor polyprotein. In addition to its proteolytic activity, it binds to viral RNA, and thus influences viral genome replication. RNA and substrate cooperatively bind to the protease. Cleaves host PABP1, this cleavage is important for viral replication. Cleaves host TANK and disrupts the TANK-TBK1-IKKepsilon-IRF3 complex, thereby inhibiting the induction of the IFN-beta signal pathway. Its function is as follows. Replicates the genomic and antigenomic RNAs by recognizing replications specific signals. Performs VPg uridylylation. This is Genome polyprotein from Cosavirus A (isolate Human/Pakistan/0553/-) (HCoSV-A).